The following is a 310-amino-acid chain: Prostate androgen-regulated mucin-like protein 1 homolog (310 aa).

The signal sequence occupies residues 1-20 (MVYKTLFALCILTAGWRVQS). Residues 21–258 (LPTSAPLSVS…EVEHALSSGS (238 aa)) are Extracellular-facing. Positions 40-74 (TIWTSSPQNTDADTASPSNGTHNNSVLPVTASAPT) are enriched in polar residues. The disordered stretch occupies residues 40 to 224 (TIWTSSPQNT…VPQEKTPPTT (185 aa)). Asn58, Asn62, and Asn80 each carry an N-linked (GlcNAc...) asparagine glycan. Over residues 92–103 (SPGSNWEGTNTD) the composition is skewed to polar residues. Positions 150 to 209 (SPQAPASSPSSLSTSPPEVFSVSVTTNHSSTVTSTQPTGAPTAPESPTEESSSDHTPTSH) are enriched in low complexity. Residue Asn176 is glycosylated (N-linked (GlcNAc...) asparagine). The helical transmembrane segment at 259 to 279 (IAAITVTVIAVVLLVFGVAAY) threads the bilayer. Topologically, residues 280–310 (LKIRHSSYGRLLDDHDYGSWGNYNNPLYDDS) are cytoplasmic. The residue at position 298 (Ser298) is a Phosphoserine.

Belongs to the PARM family. Post-translationally, highly N-glycosylated and O-glycosylated.

The protein resides in the cell membrane. It localises to the golgi apparatus membrane. The protein localises to the endosome membrane. May regulate TLP1 expression and telomerase activity, thus enabling certain prostatic cells to resist apoptosis. This is Prostate androgen-regulated mucin-like protein 1 homolog (PARM1) from Pongo abelii (Sumatran orangutan).